The primary structure comprises 189 residues: MISMNRLSILLFVFAFGLTMMSNTALSYKHSVWIRNFLHEKNDLIIHCKSTNHDMVYHRLHPTGSYHLLVDDDSDYFWCHLWQGPNFKHHQVFGVNHGDVWEAREDGIYFSQIKYARDLRQHVFMYGWNVPLTLSRASSLGLCCVSLSLLLSSLVLFYFYLVLVLKFIFFIMNFKNLIFICVGIFLFSL.

Residues 1–25 (MISMNRLSILLFVFAFGLTMMSNTA) form the signal peptide.

Belongs to the plant self-incompatibility (S1) protein family.

The protein localises to the secreted. This chain is S-protein homolog 26, found in Arabidopsis thaliana (Mouse-ear cress).